An 88-amino-acid chain; its full sequence is EMBRYO SURROUNDING FACTOR 1-like protein 11 (88 aa).

The signal sequence occupies residues Met1–Tyr23. Intrachain disulfides connect Cys44–Cys59, Cys49–Cys78, Cys57–Cys74, and Cys60–Cys67.

The protein belongs to the MEG family. In terms of tissue distribution, expressed in stems.

In Arabidopsis thaliana (Mouse-ear cress), this protein is EMBRYO SURROUNDING FACTOR 1-like protein 11 (ESFL11).